A 123-amino-acid polypeptide reads, in one-letter code: MPTIQQLIRTERSKVQKKTKSPALKQCPQRRGVCTRVYTTTPKKPNSALRKVARVRLTSGFEVTAYIPGIGHNLQEHSVVLIRGGRVKDLPGVRYHIIRGTLDATGVKDRKQGRSKYGTKRPK.

The interval 1 to 28 is disordered; the sequence is MPTIQQLIRTERSKVQKKTKSPALKQCP. 3-methylthioaspartic acid is present on Asp89. Residues 104–123 form a disordered region; sequence ATGVKDRKQGRSKYGTKRPK. Basic residues predominate over residues 113-123; sequence GRSKYGTKRPK.

This sequence belongs to the universal ribosomal protein uS12 family. In terms of assembly, part of the 30S ribosomal subunit. Contacts proteins S8 and S17. May interact with IF1 in the 30S initiation complex.

Its function is as follows. With S4 and S5 plays an important role in translational accuracy. In terms of biological role, interacts with and stabilizes bases of the 16S rRNA that are involved in tRNA selection in the A site and with the mRNA backbone. Located at the interface of the 30S and 50S subunits, it traverses the body of the 30S subunit contacting proteins on the other side and probably holding the rRNA structure together. The combined cluster of proteins S8, S12 and S17 appears to hold together the shoulder and platform of the 30S subunit. The protein is Small ribosomal subunit protein uS12 of Gloeothece citriformis (strain PCC 7424) (Cyanothece sp. (strain PCC 7424)).